The sequence spans 263 residues: Glucosamine-6-phosphate deaminase (263 aa).

Residue Asp-72 is the Proton acceptor; for enolization step of the active site. Residue Asp-141 is the For ring-opening step of the active site. The Proton acceptor; for ring-opening step role is filled by His-143. Glu-148 (for ring-opening step) is an active-site residue.

It belongs to the glucosamine/galactosamine-6-phosphate isomerase family. NagB subfamily.

The enzyme catalyses alpha-D-glucosamine 6-phosphate + H2O = beta-D-fructose 6-phosphate + NH4(+). The protein operates within amino-sugar metabolism; N-acetylneuraminate degradation; D-fructose 6-phosphate from N-acetylneuraminate: step 5/5. With respect to regulation, allosterically activated by N-acetylglucosamine 6-phosphate (GlcNAc6P). Its function is as follows. Catalyzes the reversible isomerization-deamination of glucosamine 6-phosphate (GlcN6P) to form fructose 6-phosphate (Fru6P) and ammonium ion. This chain is Glucosamine-6-phosphate deaminase, found in Phocaeicola vulgatus (strain ATCC 8482 / DSM 1447 / JCM 5826 / CCUG 4940 / NBRC 14291 / NCTC 11154) (Bacteroides vulgatus).